The primary structure comprises 217 residues: Variable small protein 22 (217 aa).

The first 18 residues, Met1–Ser18, serve as a signal peptide directing secretion. Cys19 carries N-palmitoyl cysteine lipidation. The S-diacylglycerol cysteine moiety is linked to residue Cys19. The interval Leu151–Lys174 is disordered. Positions Asp155–Lys174 are enriched in basic and acidic residues.

It belongs to the variable small protein (Vsp) family.

The protein localises to the cell outer membrane. In terms of biological role, the Vlp and Vsp proteins are antigenically distinct proteins, only one vlp or vsp gene is transcriptionally active at any one time. Switching between these genes is a mechanism of host immune response evasion. The polypeptide is Variable small protein 22 (Borrelia hermsii).